Here is a 119-residue protein sequence, read N- to C-terminus: Large ribosomal subunit protein eL31y (119 aa).

The protein belongs to the eukaryotic ribosomal protein eL31 family.

The sequence is that of Large ribosomal subunit protein eL31y (RPL31B) from Arabidopsis thaliana (Mouse-ear cress).